Consider the following 122-residue polypeptide: Large ribosomal subunit protein uL14 (122 aa).

It belongs to the universal ribosomal protein uL14 family. Part of the 50S ribosomal subunit. Forms a cluster with proteins L3 and L19. In the 70S ribosome, L14 and L19 interact and together make contacts with the 16S rRNA in bridges B5 and B8.

In terms of biological role, binds to 23S rRNA. Forms part of two intersubunit bridges in the 70S ribosome. The protein is Large ribosomal subunit protein uL14 of Rickettsia rickettsii (strain Iowa).